The following is a 472-amino-acid chain: SURF6 homolog gldi-11 (472 aa).

Disordered regions lie at residues 53–73 (LSKK…AKGL), 89–232 (KSKQ…SPEI), 249–350 (KVER…DRAL), and 414–472 (LVKK…GRIL). Residues 95–106 (KVQPQKVVAPVK) show a composition bias toward low complexity. Basic and acidic residues predominate over residues 107–132 (RPADQNKNKEKVVKKDQKKQDKKADS). Positions 133 to 150 (DSEEDDSSDDEEKEETDE) are enriched in acidic residues. The segment covering 151–160 (PVAKKQKKEE) has biased composition (basic and acidic residues). Composition is skewed to acidic residues over residues 161–175 (SSDD…EEPE) and 182–194 (EAED…EEEE). A compositionally biased stretch (polar residues) spans 197–210 (SKPNKTVAQSTLKS). Basic and acidic residues predominate over residues 212–221 (GKIDKEIQKL). Basic residues predominate over residues 274 to 285 (LKRRESKLKLKQ). Residues 286 to 305 (RRAEEKKGKEAAAQVKKETV) show a composition bias toward basic and acidic residues. Residues 414–426 (LVKKNKMKDRRKQ) are compositionally biased toward basic residues. Over residues 427–443 (KWENRENKTEGEKQTKQ) the composition is skewed to basic and acidic residues. Basic residues predominate over residues 459 to 472 (KRKMNKLRNKGRIL).

This sequence belongs to the SURF6 family.

It localises to the nucleus. The protein localises to the nucleoplasm. Functionally, binds to both DNA and RNA in vitro, with a stronger binding capacity for RNA. May represent a nucleolar constitutive protein involved in ribosomal biosynthesis or assembly. This is SURF6 homolog gldi-11 from Caenorhabditis elegans.